The primary structure comprises 198 residues: Probable GTP-binding protein EngB (198 aa).

The region spanning 21–195 is the EngB-type G domain; sequence NFSEVAFLGR…EDIIIDQTLG (175 aa). Residues 29 to 36, 56 to 60, 81 to 84, 151 to 154, and 174 to 176 each bind GTP; these read GRSNVGKS, GKTQL, DLPG, TKCD, and VSN. The Mg(2+) site is built by Ser-36 and Thr-58.

Belongs to the TRAFAC class TrmE-Era-EngA-EngB-Septin-like GTPase superfamily. EngB GTPase family. Mg(2+) serves as cofactor.

In terms of biological role, necessary for normal cell division and for the maintenance of normal septation. This chain is Probable GTP-binding protein EngB, found in Campylobacter jejuni subsp. jejuni serotype O:6 (strain 81116 / NCTC 11828).